Here is a 484-residue protein sequence, read N- to C-terminus: UDP-N-acetylmuramate--L-alanine ligase (484 aa).

125–131 (GTHGKTT) provides a ligand contact to ATP.

Belongs to the MurCDEF family.

It localises to the cytoplasm. The catalysed reaction is UDP-N-acetyl-alpha-D-muramate + L-alanine + ATP = UDP-N-acetyl-alpha-D-muramoyl-L-alanine + ADP + phosphate + H(+). The protein operates within cell wall biogenesis; peptidoglycan biosynthesis. Its function is as follows. Cell wall formation. The protein is UDP-N-acetylmuramate--L-alanine ligase of Buchnera aphidicola subsp. Acyrthosiphon pisum (strain Tuc7).